A 393-amino-acid polypeptide reads, in one-letter code: MPKKKPTPIQLNPAPDGSAVNGTSSAETNLEALQKKLEELELDEQQRKRLEAFLTQKQKVGELKDDDFEKISELGAGNGGVVFKVSHKPSGLVMARKLIHLEIKPAIRNQIIRELQVLHECNSPYIVGFYGAFYSDGEISICMEHMDGGSLDQVLKKAGRIPEQILGKVSIAVIKGLTYLREKHKIMHRDVKPSNILVNSRGEIKLCDFGVSGQLIDSMANSFVGTRSYMSPERLQGTHYSVQSDIWSMGLSLVEMAVGRYPIPPPDAKELELLFGCQVEGDAAETPPRPRTPGRPLSSYGMDSRPPMAIFELLDYIVNEPPPKLPSGVFSLEFQDFVNKCLIKNPAERADLKQLMVHAFIKRSDAEEVDFAGWLCSTIGLNQPSTPTHAASI.

Positions 1-27 (MPKKKPTPIQLNPAPDGSAVNGTSSAE) are disordered. The region spanning 68 to 361 (FEKISELGAG…LKQLMVHAFI (294 aa)) is the Protein kinase domain. ATP contacts are provided by residues 74-82 (LGAGNGGVV) and K97. The active-site Proton acceptor is the D190. Phosphoserine; by RAF is present on residues S218 and S222. Residues 270–307 (ELELLFGCQVEGDAAETPPRPRTPGRPLSSYGMDSRPP) are RAF1-binding. T286 is modified (phosphothreonine). T292 carries the post-translational modification Phosphothreonine; by MAPK1. S298 carries the post-translational modification Phosphoserine; by PAK.

It belongs to the protein kinase superfamily. STE Ser/Thr protein kinase family. MAP kinase kinase subfamily. As to quaternary structure, found in a complex with at least BRAF, HRAS, MAP2K1, MAPK3/ERK1 and RGS14. Forms a heterodimer with MAP2K2/MEK2. Forms heterodimers with KSR2 which further dimerize to form tetramers. Interacts with KSR1 or KSR2 and BRAF; the interaction with KSR1 or KSR2 mediates KSR1-BRAF or KSR2-BRAF dimerization. Interacts with ARBB2, LAMTOR3, MAPK1/ERK2 and RAF1. Interacts with MAPK1/ERK2. Interacts with MORG1. Interacts with PPARG. Interacts with VRK2. Interacts with SGK1. Interacts with BIRC6/bruce. Interacts with KAT7; the interaction promotes KAT7 phosphorylation. Interacts with RAF1 and NEK10; the interaction is required for ERK1/2-signaling pathway activation in response to UV irradiation. Interacts with TRAF3IP3. Interacts with MOS. In terms of processing, phosphorylation at Ser-218 and Ser-222 by MAP kinase kinase kinases (BRAF or MEKK1) positively regulates kinase activity. Also phosphorylated at Thr-292 by MAPK1/ERK2 and at Ser-298 by PAK. MAPK1/ERK2 phosphorylation of Thr-292 occurs in response to cellular adhesion and leads to inhibition of Ser-298 phosphorylation by PAK. Autophosphorylated at Ser-218 and Ser-222, autophosphosphorylation is promoted by NEK10 following UV irradiation.

Its subcellular location is the cytoplasm. The protein resides in the cytoskeleton. The protein localises to the microtubule organizing center. It localises to the centrosome. It is found in the spindle pole body. Its subcellular location is the nucleus. The protein resides in the membrane. It catalyses the reaction L-seryl-[protein] + ATP = O-phospho-L-seryl-[protein] + ADP + H(+). The catalysed reaction is L-threonyl-[protein] + ATP = O-phospho-L-threonyl-[protein] + ADP + H(+). It carries out the reaction L-tyrosyl-[protein] + ATP = O-phospho-L-tyrosyl-[protein] + ADP + H(+). With respect to regulation, ras proteins such as HRAS mediate the activation of RAF proteins such as RAF1 or BRAF which in turn activate extracellular signal-regulated kinases (ERK) through MAPK (mitogen-activated protein kinases) and ERK kinases MAP2K1/MEK1 and MAP2K2/MEK2. Activation occurs through phosphorylation of Ser-218 and Ser-222. MAP2K1/MEK1 binds KSR1 or KSR2 releasing the inhibitory intramolecular interaction between KSR1 or KSR2 protein kinase and N-terminal domains. This allows KSR1 or KSR2 dimerization with BRAF leading to BRAF activation and phosphorylation of MAP2K1. MAP2K1/MEK1 is also the target of negative feed-back regulation by its substrate kinases, such as MAPK1/ERK2. These phosphorylate MAP2K1/MEK1 on Thr-292, thereby facilitating dephosphorylation of the activating residues Ser-218 and Ser-222. Inhibited by serine/threonine phosphatase 2A. In terms of biological role, dual specificity protein kinase which acts as an essential component of the MAP kinase signal transduction pathway. Binding of extracellular ligands such as growth factors, cytokines and hormones to their cell-surface receptors activates RAS and this initiates RAF1 activation. RAF1 then further activates the dual-specificity protein kinases MAP2K1/MEK1 and MAP2K2/MEK2. Both MAP2K1/MEK1 and MAP2K2/MEK2 function specifically in the MAPK/ERK cascade, and catalyze the concomitant phosphorylation of a threonine and a tyrosine residue in a Thr-Glu-Tyr sequence located in the extracellular signal-regulated kinases MAPK3/ERK1 and MAPK1/ERK2, leading to their activation and further transduction of the signal within the MAPK/ERK cascade. Activates BRAF in a KSR1 or KSR2-dependent manner; by binding to KSR1 or KSR2 releases the inhibitory intramolecular interaction between KSR1 or KSR2 protein kinase and N-terminal domains which promotes KSR1 or KSR2-BRAF dimerization and BRAF activation. Depending on the cellular context, this pathway mediates diverse biological functions such as cell growth, adhesion, survival and differentiation, predominantly through the regulation of transcription, metabolism and cytoskeletal rearrangements. One target of the MAPK/ERK cascade is peroxisome proliferator-activated receptor gamma (PPARG), a nuclear receptor that promotes differentiation and apoptosis. MAP2K1/MEK1 has been shown to export PPARG from the nucleus. The MAPK/ERK cascade is also involved in the regulation of endosomal dynamics, including lysosome processing and endosome cycling through the perinuclear recycling compartment (PNRC), as well as in the fragmentation of the Golgi apparatus during mitosis. The polypeptide is Dual specificity mitogen-activated protein kinase kinase 1 (Rattus norvegicus (Rat)).